Here is a 377-residue protein sequence, read N- to C-terminus: Acetyltransferase ple2 (377 aa).

The N-terminal stretch at 1 to 27 (MKPFSPELLVLSFILLVLSCAIRPAKG) is a signal peptide. The next 4 helical transmembrane spans lie at 29–49 (WILWVIIVALNTYLTMTTTGD), 56–76 (IANNLFVITLTATDYILLTDV), 176–196 (IAAWLLFTTNQVSILLTALSL), and 258–278 (PALYVQLYAAFFLSGVLHAIG).

This sequence belongs to the wax synthase family.

The protein resides in the membrane. Its pathway is secondary metabolite biosynthesis; terpenoid biosynthesis. In terms of biological role, acetyltransferase; part of the gene cluster that mediates the biosynthesis of pleuromutilin, a tricyclic diterpene showing antibacterial properties. The geranylgeranyl diphosphate (GGPP) synthase ple4 catalyzes the first step in pleuromutilin biosynthesis. GGPP is then substrate of the premutilin synthase (PS) ple3 to yield premutilin. Premutilin synthase is a bifunctional enzyme composed of the fusion of a class II diterpene cyclase (DTC) and a class I diterpene synthase (DTS), with the corresponding domains and active sites containing characteristic aspartate-rich motifs. GGPP is first converted to mutildienyl-diphosphate (MPP) at the class II DTC site. MPP is subsequently further cyclized at the class I DTS site, followed by a 1,5-hydride shift and addition of water prior to terminating deprotonation, to yield premutilin. The cytochrome P450 monooxygenases ple5 and ple6 hydroxylate premutilin at C-11 and C-3, respectively, producing 11-hydroxypremutilin and 3-hydroxypremutilin. The combination of the actions of both ple5 and ple6 leads to the production of 3,11-dihydroxypremutilin. The short chain dehydrogenase ple7 further converts 3,11-dihydroxypremutilin into mutilin. The acetyltransferase ple2 then acetylates mutilin to produce 14-O-acetylmutilin. Finally, the cytochrome P450 monooxygenase ple1 catalyzes hydroxylation on the alpha position of the acetyl side chain of 14-O-acetylmutilin to yield pleuromutilin. In Rhodocybe pseudopiperita (Clitopilus pseudopiperitus), this protein is Acetyltransferase ple2.